We begin with the raw amino-acid sequence, 344 residues long: Gas vesicle ATPase GvpN2 (344 aa).

The disordered stretch occupies residues 1-55 (MTDTSRNRKVRGSKIRSSRSDKRQSRGSEDKELKRLADARDTDSEQAGDRVGDAF). Residues 7 to 17 (NRKVRGSKIRS) show a composition bias toward basic residues. Residues 18-52 (SRSDKRQSRGSEDKELKRLADARDTDSEQAGDRVG) are compositionally biased toward basic and acidic residues. 89-96 (GPTGCGKT) provides a ligand contact to ATP.

Belongs to the CbbQ/NirQ/NorQ/GpvN family. In terms of assembly, forms homodimers, a GvpN-GvpO heterodimer, interacts with GvpC and GvpL, might interact with GvpA.

Its subcellular location is the gas vesicle. It localises to the cytoplasm. The catalysed reaction is ATP + H2O = ADP + phosphate + H(+). Functionally, an ATPase that functions in gas vesicle formation. A minor component of the gas vesicle, also found in soluble extracts. Gas vesicles are hollow, gas filled proteinaceous nanostructures found in several microbial planktonic microorganisms. They allow positioning of halobacteria at the optimal depth for growth in the poorly aerated, shallow brine pools of their habitat. Its function is as follows. Expression of 2 c-vac DNA fragments containing 2 divergently transcribed regions (gvpE-gvpF-gvpG-gvpH-gvpI-gvpJ-gvpK-gvpL-gvpM and gvpA-gvpC-gvpN-gvpO) allows H.volcanii to produce gas vesicles. The polypeptide is Gas vesicle ATPase GvpN2 (Halobacterium salinarum (strain ATCC 700922 / JCM 11081 / NRC-1) (Halobacterium halobium)).